Here is a 501-residue protein sequence, read N- to C-terminus: Aerobic glycerol-3-phosphate dehydrogenase (501 aa).

Residue 5–33 (DLIVIGGGINGAGIAADAAGRGLSVLMLE) participates in FAD binding.

Belongs to the FAD-dependent glycerol-3-phosphate dehydrogenase family. FAD serves as cofactor.

The protein localises to the cytoplasm. It carries out the reaction a quinone + sn-glycerol 3-phosphate = dihydroxyacetone phosphate + a quinol. It participates in polyol metabolism; glycerol degradation via glycerol kinase pathway; glycerone phosphate from sn-glycerol 3-phosphate (aerobic route): step 1/1. Conversion of glycerol 3-phosphate to dihydroxyacetone. Uses molecular oxygen or nitrate as electron acceptor. This chain is Aerobic glycerol-3-phosphate dehydrogenase (glpD), found in Escherichia coli (strain K12).